We begin with the raw amino-acid sequence, 387 residues long: Killer cell lectin-like receptor subfamily G member 2 (387 aa).

Positions 1-105 are disordered; that stretch reads MEPPQVPAEA…SGEPAPASWA (105 aa). Residues 15-27 are compositionally biased toward basic and acidic residues; that stretch reads ASEDSPRPERTGW. Serine 143 carries the phosphoserine modification. Residues 155–174 are disordered; the sequence is QWLPRAPSPGSTWSRGSPLA. Residues 241-261 form a helical membrane-spanning segment; sequence WALVVMAVLLAVCTVAVVALA. A C-type lectin domain is found at 278-383; the sequence is SQEQCYYLSE…CSSPRPWVCA (106 aa). 2 disulfide bridges follow: cysteine 299–cysteine 382 and cysteine 361–cysteine 374.

It is found in the membrane. This Mus musculus (Mouse) protein is Killer cell lectin-like receptor subfamily G member 2 (Klrg2).